The sequence spans 279 residues: Putative pyruvate, phosphate dikinase regulatory protein (279 aa).

154-161 contacts ADP; sequence GVSRTSKT.

Belongs to the pyruvate, phosphate/water dikinase regulatory protein family. PDRP subfamily.

It carries out the reaction N(tele)-phospho-L-histidyl/L-threonyl-[pyruvate, phosphate dikinase] + ADP = N(tele)-phospho-L-histidyl/O-phospho-L-threonyl-[pyruvate, phosphate dikinase] + AMP + H(+). It catalyses the reaction N(tele)-phospho-L-histidyl/O-phospho-L-threonyl-[pyruvate, phosphate dikinase] + phosphate + H(+) = N(tele)-phospho-L-histidyl/L-threonyl-[pyruvate, phosphate dikinase] + diphosphate. In terms of biological role, bifunctional serine/threonine kinase and phosphorylase involved in the regulation of the pyruvate, phosphate dikinase (PPDK) by catalyzing its phosphorylation/dephosphorylation. In Rhodopseudomonas palustris (strain BisB18), this protein is Putative pyruvate, phosphate dikinase regulatory protein.